Reading from the N-terminus, the 393-residue chain is 2,3,4,5-tetrahydropyridine-2,6-dicarboxylate N-succinyltransferase (393 aa).

The Acyl-anhydride intermediate role is filled by E261. Succinyl-CoA is bound by residues R263, G278, S281, A304, 319–320, G327, K356, and 369–372; these read DA and RQDS.

It belongs to the type 2 tetrahydrodipicolinate N-succinyltransferase family. Homotrimer.

The protein localises to the cytoplasm. It catalyses the reaction (S)-2,3,4,5-tetrahydrodipicolinate + succinyl-CoA + H2O = (S)-2-succinylamino-6-oxoheptanedioate + CoA. The protein operates within amino-acid biosynthesis; L-lysine biosynthesis via DAP pathway; LL-2,6-diaminopimelate from (S)-tetrahydrodipicolinate (succinylase route): step 1/3. In terms of biological role, catalyzes the conversion of the cyclic tetrahydrodipicolinate (THDP) into the acyclic N-succinyl-L-2-amino-6-oxopimelate using succinyl-CoA. In Nitratiruptor sp. (strain SB155-2), this protein is 2,3,4,5-tetrahydropyridine-2,6-dicarboxylate N-succinyltransferase.